Reading from the N-terminus, the 376-residue chain is Putative glutamate--cysteine ligase 2-1 (376 aa).

It belongs to the glutamate--cysteine ligase type 2 family. YbdK subfamily.

The enzyme catalyses L-cysteine + L-glutamate + ATP = gamma-L-glutamyl-L-cysteine + ADP + phosphate + H(+). Functionally, ATP-dependent carboxylate-amine ligase which exhibits weak glutamate--cysteine ligase activity. The polypeptide is Putative glutamate--cysteine ligase 2-1 (Rubrobacter xylanophilus (strain DSM 9941 / JCM 11954 / NBRC 16129 / PRD-1)).